We begin with the raw amino-acid sequence, 277 residues long: Phosphoenolpyruvate synthase regulatory protein (277 aa).

An ADP-binding site is contributed by 157-164 (GVSRCGKT).

This sequence belongs to the pyruvate, phosphate/water dikinase regulatory protein family. PSRP subfamily.

It carries out the reaction [pyruvate, water dikinase] + ADP = [pyruvate, water dikinase]-phosphate + AMP + H(+). The enzyme catalyses [pyruvate, water dikinase]-phosphate + phosphate + H(+) = [pyruvate, water dikinase] + diphosphate. In terms of biological role, bifunctional serine/threonine kinase and phosphorylase involved in the regulation of the phosphoenolpyruvate synthase (PEPS) by catalyzing its phosphorylation/dephosphorylation. In Escherichia fergusonii (strain ATCC 35469 / DSM 13698 / CCUG 18766 / IAM 14443 / JCM 21226 / LMG 7866 / NBRC 102419 / NCTC 12128 / CDC 0568-73), this protein is Phosphoenolpyruvate synthase regulatory protein.